A 106-amino-acid polypeptide reads, in one-letter code: COX assembly mitochondrial protein homolog (106 aa).

Alanine 2 bears the N-acetylalanine mark. Positions arginine 28–proline 71 constitute a CHCH domain. Short sequence motifs (cx9C motif) lie at residues cysteine 31 to cysteine 41 and cysteine 53 to cysteine 63. Cystine bridges form between cysteine 31–cysteine 63 and cysteine 41–cysteine 53.

This sequence belongs to the CMC family. Component of the MITRAC (mitochondrial translation regulation assembly intermediate of cytochrome c oxidase complex) complex, the core components of this complex being COA3/MITRAC12 and COX14.

It is found in the mitochondrion. Component of the MITRAC (mitochondrial translation regulation assembly intermediate of cytochrome c oxidase complex) complex, that regulates cytochrome c oxidase assembly. In Bos taurus (Bovine), this protein is COX assembly mitochondrial protein homolog (CMC1).